The primary structure comprises 558 residues: Proline--tRNA ligase (558 aa).

This sequence belongs to the class-II aminoacyl-tRNA synthetase family. ProS type 1 subfamily. As to quaternary structure, homodimer.

It localises to the cytoplasm. The catalysed reaction is tRNA(Pro) + L-proline + ATP = L-prolyl-tRNA(Pro) + AMP + diphosphate. In terms of biological role, catalyzes the attachment of proline to tRNA(Pro) in a two-step reaction: proline is first activated by ATP to form Pro-AMP and then transferred to the acceptor end of tRNA(Pro). As ProRS can inadvertently accommodate and process non-cognate amino acids such as alanine and cysteine, to avoid such errors it has two additional distinct editing activities against alanine. One activity is designated as 'pretransfer' editing and involves the tRNA(Pro)-independent hydrolysis of activated Ala-AMP. The other activity is designated 'posttransfer' editing and involves deacylation of mischarged Ala-tRNA(Pro). The misacylated Cys-tRNA(Pro) is not edited by ProRS. This Coprothermobacter proteolyticus (strain ATCC 35245 / DSM 5265 / OCM 4 / BT) protein is Proline--tRNA ligase.